The following is a 428-amino-acid chain: Dihydroorotase (428 aa).

Zn(2+)-binding residues include histidine 61 and histidine 63. Substrate-binding positions include 63 to 65 (HLR) and asparagine 95. 3 residues coordinate Zn(2+): aspartate 153, histidine 180, and histidine 233. Position 279 (asparagine 279) interacts with substrate. A Zn(2+)-binding site is contributed by aspartate 306. Aspartate 306 is a catalytic residue. Substrate-binding positions include histidine 310 and 324–325 (FG).

Belongs to the metallo-dependent hydrolases superfamily. DHOase family. Class I DHOase subfamily. It depends on Zn(2+) as a cofactor.

It catalyses the reaction (S)-dihydroorotate + H2O = N-carbamoyl-L-aspartate + H(+). The protein operates within pyrimidine metabolism; UMP biosynthesis via de novo pathway; (S)-dihydroorotate from bicarbonate: step 3/3. Its function is as follows. Catalyzes the reversible cyclization of carbamoyl aspartate to dihydroorotate. The sequence is that of Dihydroorotase from Geobacillus thermodenitrificans (strain NG80-2).